Reading from the N-terminus, the 529-residue chain is Peptide chain release factor 3 (529 aa).

One can recognise a tr-type G domain in the interval 11–280 (AKRRTFAIIS…GLVEWAPAPM (270 aa)). Residues 20-27 (SHPDAGKT), 88-92 (DTPGH), and 142-145 (NKLD) each bind GTP.

The protein belongs to the TRAFAC class translation factor GTPase superfamily. Classic translation factor GTPase family. PrfC subfamily.

The protein resides in the cytoplasm. Increases the formation of ribosomal termination complexes and stimulates activities of RF-1 and RF-2. It binds guanine nucleotides and has strong preference for UGA stop codons. It may interact directly with the ribosome. The stimulation of RF-1 and RF-2 is significantly reduced by GTP and GDP, but not by GMP. This Yersinia pestis bv. Antiqua (strain Antiqua) protein is Peptide chain release factor 3.